The sequence spans 294 residues: Cyclin-dependent kinase A-1 (294 aa).

The region spanning 4–287 is the Protein kinase domain; sequence YEKEEKIGEG…ARQALEHEYF (284 aa). ATP-binding positions include 10–18 and Lys33; that span reads IGEGTYGVV. Position 14 is a phosphothreonine (Thr14). Tyr15 is subject to Phosphotyrosine. The active-site Proton acceptor is the Asp127. Phosphothreonine; by CAK is present on Thr161.

This sequence belongs to the protein kinase superfamily. CMGC Ser/Thr protein kinase family. CDC2/CDKX subfamily. Post-translationally, phosphorylated at Thr-161 by CDKD-1. In terms of tissue distribution, expressed in the dividing region of the root apex and in differentiated cells such as those in the sclerenchyma, pericycle and parenchyma of the central cylinder.

The catalysed reaction is L-seryl-[protein] + ATP = O-phospho-L-seryl-[protein] + ADP + H(+). It catalyses the reaction L-threonyl-[protein] + ATP = O-phospho-L-threonyl-[protein] + ADP + H(+). The enzyme catalyses [DNA-directed RNA polymerase] + ATP = phospho-[DNA-directed RNA polymerase] + ADP + H(+). This is Cyclin-dependent kinase A-1 (CDKA-1) from Oryza sativa subsp. japonica (Rice).